Consider the following 169-residue polypeptide: Sec-independent protein translocase protein TatB (169 aa).

Residues 2–22 form a helical membrane-spanning segment; the sequence is SPGIGMPELLVVLVLALVVVG. The segment at 106–169 is disordered; the sequence is NQAETDADKA…AKPVDEIKGR (64 aa).

It belongs to the TatB family. In terms of assembly, the Tat system comprises two distinct complexes: a TatABC complex, containing multiple copies of TatA, TatB and TatC subunits, and a separate TatA complex, containing only TatA subunits. Substrates initially bind to the TatABC complex, which probably triggers association of the separate TatA complex to form the active translocon.

It is found in the cell inner membrane. Part of the twin-arginine translocation (Tat) system that transports large folded proteins containing a characteristic twin-arginine motif in their signal peptide across membranes. Together with TatC, TatB is part of a receptor directly interacting with Tat signal peptides. TatB may form an oligomeric binding site that transiently accommodates folded Tat precursor proteins before their translocation. The chain is Sec-independent protein translocase protein TatB from Maricaulis maris (strain MCS10) (Caulobacter maris).